Here is a 282-residue protein sequence, read N- to C-terminus: D-alanine aminotransferase (282 aa).

Tyr-32 provides a ligand contact to substrate. Arg-51 is a binding site for pyridoxal 5'-phosphate. 2 residues coordinate substrate: Arg-99 and His-101. Residue Lys-146 is the Proton acceptor of the active site. At Lys-146 the chain carries N6-(pyridoxal phosphate)lysine. Glu-178 lines the pyridoxal 5'-phosphate pocket.

This sequence belongs to the class-IV pyridoxal-phosphate-dependent aminotransferase family. As to quaternary structure, homodimer. It depends on pyridoxal 5'-phosphate as a cofactor.

The enzyme catalyses D-alanine + 2-oxoglutarate = D-glutamate + pyruvate. Acts on the D-isomers of alanine, leucine, aspartate, glutamate, aminobutyrate, norvaline and asparagine. The enzyme transfers an amino group from a substrate D-amino acid to the pyridoxal phosphate cofactor to form pyridoxamine and an alpha-keto acid in the first half-reaction. The second half-reaction is the reverse of the first, transferring the amino group from the pyridoxamine to a second alpha-keto acid to form the product D-amino acid via a ping-pong mechanism. This is an important process in the formation of D-alanine and D-glutamate, which are essential bacterial cell wall components. The protein is D-alanine aminotransferase (dat) of Staphylococcus aureus (strain MSSA476).